Consider the following 306-residue polypeptide: D-alanine--D-alanine ligase (306 aa).

The ATP-grasp domain occupies 101 to 303; that stretch reads KQVWQAVGLP…FSQLVVKILE (203 aa). 134-189 is an ATP binding site; sequence FTHLGLPLIVKPSREGSSVGMSKVNTLSELPAALEEAFRHDDDILVEKWLSGPEYT. D257, E270, and N272 together coordinate Mg(2+).

It belongs to the D-alanine--D-alanine ligase family. The cofactor is Mg(2+). Mn(2+) serves as cofactor.

The protein localises to the cytoplasm. It catalyses the reaction 2 D-alanine + ATP = D-alanyl-D-alanine + ADP + phosphate + H(+). Its pathway is cell wall biogenesis; peptidoglycan biosynthesis. Cell wall formation. This is D-alanine--D-alanine ligase from Pectobacterium carotovorum subsp. carotovorum (strain PC1).